The chain runs to 1906 residues: Myosin light chain kinase, smooth muscle (1906 aa).

Ig-like C2-type domains are found at residues Pro-28–Thr-117 and Pro-156–Thr-244. Disordered regions lie at residues Ser-127 to Lys-157 and Glu-309 to Ser-453. Positions Glu-309–Lys-321 are enriched in basic and acidic residues. Composition is skewed to polar residues over residues Leu-345 to Leu-354 and Pro-384 to Pro-402. The segment covering Arg-403–Pro-424 has biased composition (basic and acidic residues). 4 consecutive Ig-like C2-type domains span residues Pro-429–Thr-517, Pro-521–Thr-613, Pro-637–Thr-725, and Pro-735–Ser-830. The IIA-1 repeat unit spans residues Val-660 to Glu-676. The segment at Val-660–Pro-1833 is 4 X repeats, motif IIA. Residues Ser-693–Thr-708 form an IIB-1 repeat. The interval Ser-693–Thr-1866 is 5 X repeats, motif IIB. One copy of the IIA-2 repeat lies at Ile-758 to Glu-774. The IIB-2 repeat unit spans residues Thr-791 to Ile-807. Disordered stretches follow at residues Arg-831 to Val-881 and Pro-947 to Phe-1086. 2 stretches are compositionally biased toward basic and acidic residues: residues Glu-833–Gly-850 and Ser-867–Val-881. An III-1 repeat occupies Ala-970 to Lys-987. A 4 X repeats, motif III region spans residues Ala-970–Gln-1226. Residues Thr-977 to Pro-988 are compositionally biased toward pro residues. The stretch at Ala-999–Asn-1016 is one III-2 repeat. Residues Val-1039–His-1051 show a composition bias toward basic and acidic residues. The III-3 repeat unit spans residues Ile-1061 to Pro-1078. Ig-like C2-type domains follow at residues Pro-1084–Leu-1172 and Pro-1225–Thr-1313. One copy of the IIA-3 repeat lies at Ile-1107–Ala-1123. The stretch at Ser-1140–Cys-1156 is one IIB-3 repeat. Residues Lys-1180 to Ile-1227 are disordered. One copy of the III-4 repeat lies at Val-1209–Gln-1226. The IIB-4 repeat unit spans residues Lys-1281–Leu-1297. Residues Lys-1317–Lys-1364 are motif IA. In terms of domain architecture, Fibronectin type-III spans Pro-1321–Lys-1414. The motif IB stretch occupies residues Arg-1385–Pro-1402. The interval Lys-1414–Glu-1433 is disordered. Acidic residues predominate over residues Gln-1415–Lys-1432. Residues Tyr-1453–Leu-1708 form the Protein kinase domain. Residues Leu-1459–Val-1467 and Lys-1482 each bind ATP. Residue Asp-1574 is the Proton acceptor of the active site. The interval Thr-1700–Gly-1763 is calmodulin-binding. Positions Glu-1716–Tyr-1728 are calmodulin autoinhibition (AM13) region. The interval Ala-1730 to Ser-1749 is calmodulin recognition (RS20) region. At Ser-1762 the chain carries Phosphoserine; by PKG. Ser-1768 is modified (phosphoserine; by MAPK). Residues Pro-1794–Glu-1885 form the Ig-like C2-type 9 domain. The IIA-4 repeat unit spans residues Ile-1817–Pro-1833. Residues Ser-1851–Thr-1866 form an IIB-5 repeat. The tract at residues Glu-1885–Glu-1906 is disordered. The span at Gly-1893–Glu-1906 shows a compositional bias: acidic residues.

This sequence belongs to the protein kinase superfamily. CAMK Ser/Thr protein kinase family. In terms of assembly, all isoforms including Telokin bind calmodulin. The cofactor is Mg(2+). Ca(2+) serves as cofactor. In terms of processing, the C-terminus is deglutamylated, leading to the formation of Myosin light chain kinase, smooth muscle, deglutamylated form. The C-terminus is variable, with one to five C-terminal glutamyl residues being removed producing five forms differring in their number of C-terminal glutamyl residues. Post-translationally, acetylated. Phosphorylation of telokin by PKG has no significant effect on its myosin binding activity, but promotes translocation to the membrane. As to expression, isoform telokin is expressed in gizzard, heart, lung, intestine, and skeletal muscle although the levels of the expression in the latter were much less than that in the gizzard.

The protein resides in the cytoplasm. Its subcellular location is the cytosol. It is found in the membrane. It carries out the reaction L-seryl-[myosin light chain] + ATP = O-phospho-L-seryl-[myosin light chain] + ADP + H(+). The catalysed reaction is L-threonyl-[myosin light chain] + ATP = O-phospho-L-threonyl-[myosin light chain] + ADP + H(+). Its activity is regulated as follows. Activated by phosphorylation on Tyr-478. Isoforms which lack this tyrosine residue are not regulated in this way. All catalytically active isoforms require binding to calcium and calmodulin for activation. Functionally, phosphorylates a specific serine in the N-terminus of a myosin light chain, which leads to the formation of calmodulin/MLCK signal transduction complexes which allow selective transduction of calcium signals. This is Myosin light chain kinase, smooth muscle (Mylk) from Gallus gallus (Chicken).